A 142-amino-acid chain; its full sequence is DNA-directed RNA polymerase II subunit RPB4 (142 aa).

This sequence belongs to the eukaryotic RPB4 RNA polymerase subunit family. In terms of assembly, component of the RNA polymerase II (Pol II) core complex consisting of 12 subunits: a ten-subunit catalytic core composed of POLR2A/RPB1, POLR2B/RPB2, POLR2C/RPB3, POLR2I/RPB9, POLR2J/RPB11, POLR2E/RPABC1, POLR2F/RPABC2, POLR2H/RPABC3, POLR2K/RPABC4 and POLR2L/RPABC5 and a mobile stalk composed of two subunits POLR2D/RPB4 and POLR2G/RPB7, protruding from the core and functioning primarily in transcription initiation. Part of Pol II(G) complex, in which Pol II core associates with an additional subunit POLR2M; unlike conventional Pol II, Pol II(G) functions as a transcriptional repressor. Part of Pol II pre-initiation complex (PIC), in which Pol II core assembles with Mediator, general transcription factors and other specific initiation factors including GTF2E1, GTF2E2, GTF2F1, GTF2F2, TCEA1, ERCC2, ERCC3, GTF2H2, GTF2H3, GTF2H4, GTF2H5, GTF2A1, GTF2A2, GTF2B and TBP; this large multi-subunit PIC complex mediates DNA unwinding and targets Pol II core to the transcription start site where the first phosphodiester bond forms.

Its subcellular location is the nucleus. Functionally, core component of RNA polymerase II (Pol II), a DNA-dependent RNA polymerase which synthesizes mRNA precursors and many functional non-coding RNAs using the four ribonucleoside triphosphates as substrates. Pol II is the central component of the basal RNA polymerase II transcription machinery. It is composed of mobile elements that move relative to each other. POLR2D/RPB4 is part of a subcomplex with POLR2G/RPB7 that binds to a pocket formed by POLR2A/RPB1, POLR2B/RPB2 and POLR2F/RPABC2 at the base of the clamp element. The POLR2D/RPB4-POLR2G/RPB7 subcomplex seems to lock the clamp via POLR2G/RPB7 in the closed conformation thus preventing double-stranded DNA to enter the active site cleft. The POLR2D/RPB4-POLR2G/RPB7 subcomplex binds single-stranded DNA and RNA. The polypeptide is DNA-directed RNA polymerase II subunit RPB4 (POLR2D) (Bos taurus (Bovine)).